We begin with the raw amino-acid sequence, 151 residues long: Urease accessory protein UreE (151 aa).

It belongs to the UreE family.

Its subcellular location is the cytoplasm. Its function is as follows. Involved in urease metallocenter assembly. Binds nickel. Probably functions as a nickel donor during metallocenter assembly. The chain is Urease accessory protein UreE from Bacillus cereus (strain ATCC 10987 / NRS 248).